Here is a 65-residue protein sequence, read N- to C-terminus: Large ribosomal subunit protein bL35 (65 aa).

Positions 1 to 26 (MPKIKTVRGAAKRFKKTASGGFKRKQ) are disordered. Over residues 10–26 (AAKRFKKTASGGFKRKQ) the composition is skewed to basic residues.

This sequence belongs to the bacterial ribosomal protein bL35 family.

This Haemophilus ducreyi (strain 35000HP / ATCC 700724) protein is Large ribosomal subunit protein bL35.